We begin with the raw amino-acid sequence, 313 residues long: Olfactory receptor 51A2 (313 aa).

Over 1 to 27 (MSIINTSYVEITTFFLVGMPGLEYAHI) the chain is Extracellular. N-linked (GlcNAc...) asparagine glycosylation is present at asparagine 5. A helical membrane pass occupies residues 28–48 (WISIPICSMYLIAILGNGTIL). Residues 49–56 (FIIKTEPS) are Cytoplasmic-facing. A helical transmembrane segment spans residues 57–77 (LHGPMYYFLSMLAMSDLGLSL). The Extracellular segment spans residues 78-101 (SSLPTVLSIFLFNAPETSSSACFA). An intrachain disulfide couples cysteine 99 to cysteine 191. A helical membrane pass occupies residues 102–122 (QEFFIHGFSVLESSVLLIMSF). The Cytoplasmic segment spans residues 123–141 (DRFLAIHNPLRYTSILTTV). Residues 142–162 (RVAQIGIVFSFKSMLLVLPFP) form a helical membrane-spanning segment. At 163–198 (FTLRSLRYCKKNQLSHSYCLHQDVMKLACSDNRIDV) the chain is on the extracellular side. Residues 199–218 (IYGFFGALCLMVDFILIAVS) form a helical membrane-spanning segment. Residues 219–238 (YTLILKTVPGIASKKEELKA) are Cytoplasmic-facing. A helical membrane pass occupies residues 239-259 (LNTCVSHICAVIIFYLPIINL). The Extracellular segment spans residues 260 to 274 (AVVHRFAGHVSPLIN). Residues 275-295 (VLMANVLLLVPPLMKPIVYCV) form a helical membrane-spanning segment. Residues 296-313 (KTKQIRVRVVAKLCQWKI) lie on the Cytoplasmic side of the membrane.

It belongs to the G-protein coupled receptor 1 family.

It is found in the cell membrane. Its function is as follows. Odorant receptor. This is Olfactory receptor 51A2 (OR51A2) from Homo sapiens (Human).